The chain runs to 580 residues: Protein O-linked-mannose beta-1,4-N-acetylglucosaminyltransferase 2 (580 aa).

Topologically, residues 1–4 (MHLS) are cytoplasmic. A helical; Signal-anchor for type II membrane protein membrane pass occupies residues 5–25 (AVFNALLVSVLAAVLWKHVRL). At 26-580 (REHAATLEEE…PFADVLVCNT (555 aa)) the chain is on the lumenal side. N-linked (GlcNAc...) asparagine glycosylation is found at asparagine 99 and asparagine 276. The Fibronectin type-III domain maps to 488–580 (ARCQASVHGA…PFADVLVCNT (93 aa)).

This sequence belongs to the glycosyltransferase 61 family.

The protein resides in the endoplasmic reticulum membrane. The catalysed reaction is 3-O-(alpha-D-mannosyl)-L-threonyl-[protein] + UDP-N-acetyl-alpha-D-glucosamine = 3-O-(N-acetyl-beta-D-glucosaminyl-(1-&gt;4)-alpha-D-mannosyl)-L-threonyl-[protein] + UDP + H(+). It functions in the pathway protein modification; protein glycosylation. Functionally, O-linked mannose beta-1,4-N-acetylglucosaminyltransferase that transfers UDP-N-acetyl-D-glucosamine to the 4-position of the mannose to generate N-acetyl-D-glucosamine-beta-1,4-O-D-mannosylprotein. Involved in the biosynthesis of the phosphorylated O-mannosyl trisaccharide (N-acetylgalactosamine-beta-3-N-acetylglucosamine-beta-4-(phosphate-6-)mannose), a carbohydrate structure present in alpha-dystroglycan (DAG1), which is required for binding laminin G-like domain-containing extracellular proteins with high affinity. The protein is Protein O-linked-mannose beta-1,4-N-acetylglucosaminyltransferase 2 (POMGNT2) of Pan troglodytes (Chimpanzee).